A 340-amino-acid polypeptide reads, in one-letter code: GTPase Obg (340 aa).

The 158-residue stretch at 1 to 158 (MSFIDEAKIY…KHIILKLKII (158 aa)) folds into the Obg domain. In terms of domain architecture, OBG-type G spans 159-325 (SDVGIIGLPN…LSTLIKQIHK (167 aa)). GTP contacts are provided by residues 165–172 (GLPNAGKS), 190–194 (FTTLE), 211–214 (DIPG), 278–281 (NKSD), and 306–308 (SSI). Mg(2+)-binding residues include S172 and T192.

The protein belongs to the TRAFAC class OBG-HflX-like GTPase superfamily. OBG GTPase family. In terms of assembly, monomer. Mg(2+) is required as a cofactor.

It is found in the cytoplasm. In terms of biological role, an essential GTPase which binds GTP, GDP and possibly (p)ppGpp with moderate affinity, with high nucleotide exchange rates and a fairly low GTP hydrolysis rate. Plays a role in control of the cell cycle, stress response, ribosome biogenesis and in those bacteria that undergo differentiation, in morphogenesis control. The chain is GTPase Obg from Ehrlichia canis (strain Jake).